Consider the following 163-residue polypeptide: Jun dimerization protein 2 (163 aa).

Disordered regions lie at residues 1–20 (MMPG…PGLG) and 59–89 (KRPQ…AARC). A Glycyl lysine isopeptide (Lys-Gly) (interchain with G-Cter in SUMO2) cross-link involves residue lysine 65. Residues 72–135 (EERRKRRREK…QQLILMLNRH (64 aa)) enclose the bZIP domain. The interval 74–96 (RRKRRREKNKVAAARCRNKKKER) is basic motif. The interval 100–128 (LQRESERLELMNAELKTQIEELKLERQQL) is leucine-zipper. Threonine 148 is subject to Phosphothreonine; by MAPK8.

The protein belongs to the bZIP family. ATF subfamily. Forms a homodimer or heterodimer with JUN, JUNB, JUND, CEBPG and ATF2 thereby inhibiting transactivation by JUN, ATF2 and CEBPG. Binds multiple DNA elements such as cAMP-response element (CRE) and TPA response element (TRE) either as homodimer or heterodimer. Interacts with IRF2BP1. In terms of processing, phosphorylation of Thr-148 by MAPK8 in response to different stress conditions such as, UV irradiation, oxidatives stress and anisomycin treatments. Polyubiquitinated; probably by IRF2BP1. Ubiquitously expressed in all adult tissues tested as well in embryos.

It localises to the nucleus. In terms of biological role, component of the AP-1 transcription factor that represses transactivation mediated by the Jun family of proteins. Involved in a variety of transcriptional responses associated with AP-1, such as UV-induced apoptosis, cell differentiation, tumorigenesis and antitumogeneris. Can also function as a repressor by recruiting histone deacetylase 3/HDAC3 to the promoter region of JUN. May control transcription via direct regulation of the modification of histones and the assembly of chromatin. This chain is Jun dimerization protein 2 (Jdp2), found in Mus musculus (Mouse).